A 230-amino-acid chain; its full sequence is 7-cyano-7-deazaguanine synthase (230 aa).

ATP is bound at residue 8–18; sequence FSGGQDSTTCL. Residues C187, C196, C199, and C202 each coordinate Zn(2+).

Belongs to the QueC family. It depends on Zn(2+) as a cofactor.

The enzyme catalyses 7-carboxy-7-deazaguanine + NH4(+) + ATP = 7-cyano-7-deazaguanine + ADP + phosphate + H2O + H(+). It functions in the pathway purine metabolism; 7-cyano-7-deazaguanine biosynthesis. In terms of biological role, catalyzes the ATP-dependent conversion of 7-carboxy-7-deazaguanine (CDG) to 7-cyano-7-deazaguanine (preQ(0)). The sequence is that of 7-cyano-7-deazaguanine synthase from Shewanella amazonensis (strain ATCC BAA-1098 / SB2B).